We begin with the raw amino-acid sequence, 266 residues long: 3-methyl-2-oxobutanoate hydroxymethyltransferase 2 (266 aa).

D45 and D84 together coordinate Mg(2+). Residues 45 to 46 (DS), D84, and K112 each bind 3-methyl-2-oxobutanoate. A Mg(2+)-binding site is contributed by E114. Catalysis depends on E181, which acts as the Proton acceptor.

Belongs to the PanB family. As to quaternary structure, homodecamer; pentamer of dimers. The cofactor is Mg(2+).

It localises to the cytoplasm. It carries out the reaction 3-methyl-2-oxobutanoate + (6R)-5,10-methylene-5,6,7,8-tetrahydrofolate + H2O = 2-dehydropantoate + (6S)-5,6,7,8-tetrahydrofolate. It functions in the pathway cofactor biosynthesis; (R)-pantothenate biosynthesis; (R)-pantoate from 3-methyl-2-oxobutanoate: step 1/2. Its function is as follows. Catalyzes the reversible reaction in which hydroxymethyl group from 5,10-methylenetetrahydrofolate is transferred onto alpha-ketoisovalerate to form ketopantoate. In Pseudomonas entomophila (strain L48), this protein is 3-methyl-2-oxobutanoate hydroxymethyltransferase 2.